Reading from the N-terminus, the 310-residue chain is Acetaldehyde dehydrogenase 1 (310 aa).

12-15 (SGNI) is a binding site for NAD(+). The Acyl-thioester intermediate role is filled by C132. Residues 163–171 (SAGPGTRAN) and N287 contribute to the NAD(+) site.

This sequence belongs to the acetaldehyde dehydrogenase family.

It catalyses the reaction acetaldehyde + NAD(+) + CoA = acetyl-CoA + NADH + H(+). In Pseudomonas putida (strain W619), this protein is Acetaldehyde dehydrogenase 1.